A 384-amino-acid polypeptide reads, in one-letter code: Early estrogen-induced gene 1 protein (384 aa).

Residues 2 to 145 form the C2 NT-type domain; it reads AFLMKKKKFK…ILKVTIGMFL (144 aa). The tract at residues 129–138 is required for interaction with TNFRSF11A/RANK; it reads NTRQDNSILK. The segment at 173–315 is disordered; that stretch reads LTCKGGGTSS…RRKKDSVESH (143 aa). Low complexity predominate over residues 183–193; sequence GGSSTNSLTGS. Over residues 227-254 the composition is skewed to polar residues; the sequence is SRNSSYASQQSKISGYSTEHSRSSSLSD. 2 stretches are compositionally biased toward basic and acidic residues: residues 280-292 and 299-315; these read GSER…EKPP and HLSD…VESH.

This sequence belongs to the EEIG family. In terms of assembly, part of a complex composed of EEIG1, TNFRSF11A/RANK, PLCG2, GAB2, TEC and BTK; complex formation increases in the presence of TNFSF11/RANKL. Interacts with PRDM1/BLIMP1; following TNFSF11/RANKL stimulation in bone marrow-derived macrophages, the interaction promotes the binding of PRDM1/BLIMP1 to the gene promoter of IRF8.

Its subcellular location is the nucleus. The protein localises to the cytoplasm. It is found in the membrane raft. In terms of biological role, key component of TNFSF11/RANKL- and TNF-induced osteoclastogenesis pathways, thereby mediates bone resorption in pathological bone loss conditions. Required for TNFSF11/RANKL-induced osteoclastogenesis via its interaction with TNFRSF11A/RANK, thereby facilitates the downsteam transcription of NFATC1 and activation of PLCG2. Facilitates recruitment of the transcriptional repressor PRDM1/BLIMP1 to the promoter of the anti-osteoclastogenesis gene IRF8, thereby resulting in transcription of osteoclast differentiation factors. May play a role in estrogen action. The sequence is that of Early estrogen-induced gene 1 protein from Homo sapiens (Human).